The sequence spans 243 residues: DNA repair protein RecO (243 aa).

This sequence belongs to the RecO family.

Functionally, involved in DNA repair and RecF pathway recombination. The protein is DNA repair protein RecO of Serratia proteamaculans (strain 568).